Here is a 111-residue protein sequence, read N- to C-terminus: uncharacterized protein (111 aa).

The protein to A.fulgidus AF1864.

This is an uncharacterized protein from Aquifex aeolicus (strain VF5).